A 224-amino-acid chain; its full sequence is ATP-dependent Clp protease proteolytic subunit 1 (224 aa).

Ser-120 acts as the Nucleophile in catalysis. Residue His-145 is part of the active site.

It belongs to the peptidase S14 family. In terms of assembly, fourteen ClpP subunits assemble into 2 heptameric rings which stack back to back to give a disk-like structure with a central cavity, resembling the structure of eukaryotic proteasomes.

The protein resides in the cytoplasm. The catalysed reaction is Hydrolysis of proteins to small peptides in the presence of ATP and magnesium. alpha-casein is the usual test substrate. In the absence of ATP, only oligopeptides shorter than five residues are hydrolyzed (such as succinyl-Leu-Tyr-|-NHMec, and Leu-Tyr-Leu-|-Tyr-Trp, in which cleavage of the -Tyr-|-Leu- and -Tyr-|-Trp bonds also occurs).. Cleaves peptides in various proteins in a process that requires ATP hydrolysis. Has a chymotrypsin-like activity. Plays a major role in the degradation of misfolded proteins. This Prochlorococcus marinus (strain MIT 9313) protein is ATP-dependent Clp protease proteolytic subunit 1.